Here is a 571-residue protein sequence, read N- to C-terminus: Sulfite reductase [NADPH] hemoprotein beta-component (571 aa).

The [4Fe-4S] cluster site is built by C435, C441, C480, and C484. A siroheme-binding site is contributed by C484.

This sequence belongs to the nitrite and sulfite reductase 4Fe-4S domain family. Alpha(8)-beta(8). The alpha component is a flavoprotein, the beta component is a hemoprotein. Siroheme serves as cofactor. [4Fe-4S] cluster is required as a cofactor.

The catalysed reaction is hydrogen sulfide + 3 NADP(+) + 3 H2O = sulfite + 3 NADPH + 4 H(+). Its pathway is sulfur metabolism; hydrogen sulfide biosynthesis; hydrogen sulfide from sulfite (NADPH route): step 1/1. Component of the sulfite reductase complex that catalyzes the 6-electron reduction of sulfite to sulfide. This is one of several activities required for the biosynthesis of L-cysteine from sulfate. This is Sulfite reductase [NADPH] hemoprotein beta-component from Erwinia tasmaniensis (strain DSM 17950 / CFBP 7177 / CIP 109463 / NCPPB 4357 / Et1/99).